A 47-amino-acid chain; its full sequence is Delta-ctenitoxin-Asp2e (47 aa).

Disulfide bonds link Cys-3/Cys-17, Cys-10/Cys-23, Cys-14/Cys-46, Cys-16/Cys-31, and Cys-25/Cys-29.

In terms of tissue distribution, expressed by the venom gland.

It localises to the secreted. Functionally, inhibits the inactivation of voltage-gated sodium channels (Nav). The sequence is that of Delta-ctenitoxin-Asp2e from Ancylometes sp. (South American fishing spider).